The sequence spans 376 residues: Metal tolerance protein 6 (376 aa).

Residues 1–28 (MAAAAGVAAGTGRGSGEGEELLPNAVEG) form a disordered region. At 1–123 (MAAAAGVAAG…CEKVARSEAL (123 aa)) the chain is on the cytoplasmic side. Residues 124–144 (AIRLSNIANMVLFAAKVYASI) traverse the membrane as a helical segment. The Vacuolar segment spans residues 145-149 (RSGSL). Residues 150-170 (AIIASTLDSLLDLLSGFILWF) form a helical membrane-spanning segment. Residues 171-191 (TAFSKKTSNPYRYPIGKRRMQ) lie on the Cytoplasmic side of the membrane. The chain crosses the membrane as a helical span at residues 192–212 (PLGILVFASVMATLGLQIILE). At 213-231 (STRSLFYDGDTFRLTKEQE) the chain is on the vacuolar side. The helical transmembrane segment at 232-252 (KWVVDIMLSVTSVKLLLVVYC) threads the bilayer. Residues 253-376 (RSFTNEILAI…PEHARSHDTL (124 aa)) lie on the Cytoplasmic side of the membrane.

The protein belongs to the cation diffusion facilitator (CDF) transporter (TC 2.A.4) family. SLC30A subfamily.

It is found in the vacuole membrane. In terms of biological role, involved in sequestration of excess metal in the cytoplasm into vacuoles to maintain metal homeostasis. This is Metal tolerance protein 6 (MTP6) from Oryza sativa subsp. japonica (Rice).